The primary structure comprises 1866 residues: Nucleoporin Nup188 (1866 aa).

It belongs to the Nup188 family. In terms of assembly, part of the nuclear pore complex (NPC).

The protein resides in the nucleus. The protein localises to the nuclear pore complex. Functionally, component of the nuclear pore complex (NPC), a complex required for the trafficking across the nuclear envelope. Required for proper protein transport into the nucleus. The protein is Nucleoporin Nup188 of Drosophila melanogaster (Fruit fly).